A 225-amino-acid polypeptide reads, in one-letter code: Peptidyl-tRNA hydrolase (225 aa).

Residue Tyr14 participates in tRNA binding. The Proton acceptor role is filled by His19. TRNA contacts are provided by Phe64, Asn66, and Asn112. Residues 184–225 (ALRMQPPKPEKPKPAAKAPEAQAPEAAPDERSALQKLADRFR) form a disordered region. The span at 198–209 (AAKAPEAQAPEA) shows a compositional bias: low complexity. The segment covering 211–225 (PDERSALQKLADRFR) has biased composition (basic and acidic residues).

The protein belongs to the PTH family. In terms of assembly, monomer.

Its subcellular location is the cytoplasm. It catalyses the reaction an N-acyl-L-alpha-aminoacyl-tRNA + H2O = an N-acyl-L-amino acid + a tRNA + H(+). Functionally, hydrolyzes ribosome-free peptidyl-tRNAs (with 1 or more amino acids incorporated), which drop off the ribosome during protein synthesis, or as a result of ribosome stalling. In terms of biological role, catalyzes the release of premature peptidyl moieties from peptidyl-tRNA molecules trapped in stalled 50S ribosomal subunits, and thus maintains levels of free tRNAs and 50S ribosomes. The polypeptide is Peptidyl-tRNA hydrolase (Cereibacter sphaeroides (strain ATCC 17023 / DSM 158 / JCM 6121 / CCUG 31486 / LMG 2827 / NBRC 12203 / NCIMB 8253 / ATH 2.4.1.) (Rhodobacter sphaeroides)).